The sequence spans 91 residues: MHNIPPEESLIEYPSDFPIKVMGKQHPEFAQTLTEVVLQFDPAFDPASVEMRPSKGGNYMGLTFTVRATSREQLDSLYRALHGHPMVSIVL.

Belongs to the UPF0250 family.

The protein is UPF0250 protein BB0170 of Bordetella bronchiseptica (strain ATCC BAA-588 / NCTC 13252 / RB50) (Alcaligenes bronchisepticus).